The sequence spans 217 residues: Small ribosomal subunit protein eS6 (217 aa).

Belongs to the eukaryotic ribosomal protein eS6 family. In terms of processing, phosphorylated.

In Encephalitozoon cuniculi (strain GB-M1) (Microsporidian parasite), this protein is Small ribosomal subunit protein eS6 (RPS6).